Consider the following 124-residue polypeptide: Ribonuclease pancreatic (124 aa).

Residues 1 to 21 form a disordered region; the sequence is AESSAMKFQRQHMDSDGHPDT. Substrate contacts are provided by lysine 7 and arginine 10. Histidine 12 acts as the Proton acceptor in catalysis. Disulfide bonds link cysteine 26–cysteine 84, cysteine 40–cysteine 95, cysteine 58–cysteine 110, and cysteine 65–cysteine 72. Substrate-binding positions include 41–45, lysine 66, and arginine 85; that span reads KPVNT. Histidine 119 functions as the Proton donor in the catalytic mechanism.

This sequence belongs to the pancreatic ribonuclease family. In terms of assembly, monomer. Interacts with and forms tight 1:1 complexes with RNH1. Dimerization of two such complexes may occur. Interaction with RNH1 inhibits this protein. As to expression, pancreas.

It localises to the secreted. It carries out the reaction an [RNA] containing cytidine + H2O = an [RNA]-3'-cytidine-3'-phosphate + a 5'-hydroxy-ribonucleotide-3'-[RNA].. The enzyme catalyses an [RNA] containing uridine + H2O = an [RNA]-3'-uridine-3'-phosphate + a 5'-hydroxy-ribonucleotide-3'-[RNA].. Functionally, endonuclease that catalyzes the cleavage of RNA on the 3' side of pyrimidine nucleotides. Acts on single-stranded and double-stranded RNA. The sequence is that of Ribonuclease pancreatic (RNASE1) from Galea musteloides (Common yellow-toothed cavy).